We begin with the raw amino-acid sequence, 526 residues long: Carotenoid cleavage oxygenase 1 (526 aa).

Residues 1-33 (MAEYVFSDAPKDSHGNGVKDAVPGKQPEELPPA) are disordered. Tyr-133 and Lys-164 together coordinate piceatannol. Trans-resveratrol contacts are provided by Tyr-133 and Lys-164. 3 residues coordinate Fe cation: His-197, His-248, and His-313. Position 383 (Glu-383) interacts with piceatannol. Residue Glu-383 participates in trans-resveratrol binding. His-510 provides a ligand contact to Fe cation.

Belongs to the carotenoid oxygenase family. Fe(2+) is required as a cofactor.

The catalysed reaction is trans-resveratrol + O2 = 3,5-dihydroxybenzaldehyde + 4-hydroxybenzaldehyde. It carries out the reaction piceatannol + O2 = 3,5-dihydroxybenzaldehyde + 3,4-dihydroxybenzaldehyde. Functionally, dioxygenase that cleaves the interphenyl C-alpha-C-beta double bond of resveratrol to yield 3,5-dihydroxybenzaldehyde and 4-hydroxybenzaldehyde. Also cleaves piceatannol, a compound that differs from resveratrol only in the occurrence of an additional hydroxyl group, which leads to the production of 3,4-dihydroxybenzaldehyde and 3,5-hydroxybenzaldehyde. Is not able to cleave trans-stilbene, 4-monohydroxy-trans-stilbene, 3,5-dihydroxy-trans-stilbene (pinosylvin), trismethoxy-resveratrol, and 3,3',5-trihydroxy-4'-methoxystilbene-3-O-beta-D-glucoside. Is not involved in carotenoid metabolism. This is Carotenoid cleavage oxygenase 1 from Neurospora crassa (strain ATCC 24698 / 74-OR23-1A / CBS 708.71 / DSM 1257 / FGSC 987).